A 339-amino-acid polypeptide reads, in one-letter code: Probable long-chain-alcohol O-fatty-acyltransferase 7 (339 aa).

Helical transmembrane passes span 7 to 27 (SLIN…CLPP), 39 to 59 (IFPV…SIFT), 113 to 133 (HLST…LYVH), 143 to 163 (FLLC…LTLL), 226 to 246 (MLIG…VVFF), 254 to 274 (TGEV…EVAA), and 287 to 307 (PVVS…WLFF).

This sequence belongs to the wax synthase family.

The protein localises to the membrane. The catalysed reaction is a long chain fatty alcohol + a fatty acyl-CoA = a wax ester + CoA. In terms of biological role, catalyzes the final step in the synthesis of long-chain linear esters (waxes). This Arabidopsis thaliana (Mouse-ear cress) protein is Probable long-chain-alcohol O-fatty-acyltransferase 7 (AT7).